Consider the following 192-residue polypeptide: ER protein translocation subcomplex subunit sec67 (192 aa).

As to quaternary structure, component of the heterotetrameric Sec62/63complex composed of sec62, sec63, sec66 and sec72. The Sec62/63 complex associates with the Sec61 complex to form the Sec complex.

The protein localises to the cytoplasm. It localises to the nucleus. Acts as a non-essential component of the Sec62/63 complex which is involved in SRP-independent post-translational translocation across the endoplasmic reticulum (ER) and functions together with the Sec61 complex and bip1 in a channel-forming translocon complex. A cycle of assembly and disassembly of Sec62/63 complex from sec61 may govern the activity of the translocon. sec72 may be involved in signal peptide recognition for a defined subset of leader peptides, or may increase the efficiency of unusual or 'difficult' secretory precursors to the translocation pore, it may be that this protein binds charged leader peptides to the membrane until they engage the translocation apparatus. The polypeptide is ER protein translocation subcomplex subunit sec67 (sec67) (Schizosaccharomyces pombe (strain 972 / ATCC 24843) (Fission yeast)).